A 456-amino-acid polypeptide reads, in one-letter code: Dual-specificity RNA methyltransferase RlmN (456 aa).

A disordered region spans residues Met1 to Val21. Catalysis depends on Glu175, which acts as the Proton acceptor. Residues Asp183 to Arg416 enclose the Radical SAM core domain. Cys190 and Cys427 are joined by a disulfide. [4Fe-4S] cluster-binding residues include Cys197, Cys201, and Cys204. Residues Gly253–Glu254, Ser285, Ser307–His309, and Asn384 contribute to the S-adenosyl-L-methionine site. Catalysis depends on Cys427, which acts as the S-methylcysteine intermediate.

It belongs to the radical SAM superfamily. RlmN family. The cofactor is [4Fe-4S] cluster.

It localises to the cytoplasm. It carries out the reaction adenosine(2503) in 23S rRNA + 2 reduced [2Fe-2S]-[ferredoxin] + 2 S-adenosyl-L-methionine = 2-methyladenosine(2503) in 23S rRNA + 5'-deoxyadenosine + L-methionine + 2 oxidized [2Fe-2S]-[ferredoxin] + S-adenosyl-L-homocysteine. The enzyme catalyses adenosine(37) in tRNA + 2 reduced [2Fe-2S]-[ferredoxin] + 2 S-adenosyl-L-methionine = 2-methyladenosine(37) in tRNA + 5'-deoxyadenosine + L-methionine + 2 oxidized [2Fe-2S]-[ferredoxin] + S-adenosyl-L-homocysteine. Its function is as follows. Specifically methylates position 2 of adenine 2503 in 23S rRNA and position 2 of adenine 37 in tRNAs. m2A2503 modification seems to play a crucial role in the proofreading step occurring at the peptidyl transferase center and thus would serve to optimize ribosomal fidelity. This Paramagnetospirillum magneticum (strain ATCC 700264 / AMB-1) (Magnetospirillum magneticum) protein is Dual-specificity RNA methyltransferase RlmN.